The sequence spans 209 residues: MNLFQNAKFFTTINHLKDLPDTPLEIAFVGRSNAGKSSAINTLTNHVRLAYVSKTPGRTQHINFFELQNGNFMVDLPGYGYAQVPEAVRAHWVNLLGDYLQQRKQLIGLVLIMDARHPLKELDIRMLDFFHTTGRPVHILLSKADKLSKNEQIKTLSQVKKLLKPYSDRQNISVQLFSSLKKQGIDEANRTVGSWLDAADAAASSPEEN.

The EngB-type G domain maps to 22–198 (TPLEIAFVGR…NRTVGSWLDA (177 aa)). Residues S37 and T59 each contribute to the Mg(2+) site.

The protein belongs to the TRAFAC class TrmE-Era-EngA-EngB-Septin-like GTPase superfamily. EngB GTPase family. The cofactor is Mg(2+).

In terms of biological role, necessary for normal cell division and for the maintenance of normal septation. In Neisseria meningitidis serogroup B (strain ATCC BAA-335 / MC58), this protein is Probable GTP-binding protein EngB.